A 289-amino-acid polypeptide reads, in one-letter code: Ribosomal RNA small subunit methyltransferase I (289 aa).

Belongs to the methyltransferase superfamily. RsmI family.

It localises to the cytoplasm. The catalysed reaction is cytidine(1402) in 16S rRNA + S-adenosyl-L-methionine = 2'-O-methylcytidine(1402) in 16S rRNA + S-adenosyl-L-homocysteine + H(+). Functionally, catalyzes the 2'-O-methylation of the ribose of cytidine 1402 (C1402) in 16S rRNA. This is Ribosomal RNA small subunit methyltransferase I from Helicobacter pylori (strain J99 / ATCC 700824) (Campylobacter pylori J99).